The following is a 103-amino-acid chain: MASGGGFEDLAREAAKYFGVWIVLVASAVAEVYLVLEGIARNPFVFVLAVALFQSSLIALFFQHLRDEPIIIRGITVSGAVLIAILIISAVTSVLTCTPYFPG.

3 helical membrane-spanning segments follow: residues 20–40 (VWIV…EGIA), 42–62 (NPFV…ALFF), and 75–95 (ITVS…TSVL).

Its subcellular location is the cell membrane. In Aeropyrum pernix (strain ATCC 700893 / DSM 11879 / JCM 9820 / NBRC 100138 / K1), this protein is Heme-copper oxidase subunit 4 (aoxC).